A 522-amino-acid chain; its full sequence is Target of rapamycin complex 2 subunit MAPKAP1 (522 aa).

Position 2 is an N-acetylalanine (alanine 2). The segment at 2–184 (AFLDNPTIIL…KKIDVYLPLH (183 aa)) is interaction with MAP3K2. The interval 2-267 (AFLDNPTIIL…GFSTLALVEK (266 aa)) is interaction with NBN. The interval 38-59 (LEKTHPPSVPGDSGSEVQGSSG) is disordered. Phosphothreonine is present on threonine 86. Phosphoserine is present on residues serine 128, serine 186, serine 315, and serine 356. Residues 139–267 (QSILSVRLEQ…GFSTLALVEK (129 aa)) enclose the CRIM domain. The interval 279–353 (LFVRINAAHG…QNAWEFCLVR (75 aa)) is SIN1-type RBD. An SIN1-type PH domain is found at 382-487 (HYKSFKVSMI…IVLKVNYILE (106 aa)). Position 393 (arginine 393) interacts with a 1,2-diacyl-sn-glycero-3-phospho-(1D-myo-inositol-3,4,5-trisphosphate). The residue at position 398 (threonine 398) is a Phosphothreonine. A 1,2-diacyl-sn-glycero-3-phospho-(1D-myo-inositol-3,4,5-trisphosphate) contacts are provided by lysine 428 and lysine 464. The tract at residues 468-522 (FESDAATVSEIVLKVNYILESRASTARADYFAQKQRKLNRRTSFSFQKEKKSGQQ) is interaction with ATF2. Serine 510 carries the post-translational modification Phosphoserine.

This sequence belongs to the SIN1 family. Component of the mechanistic target of rapamycin complex 2 (mTORC2), consisting in two heterotretramers composed of MTOR, MLST8, RICTOR and MAPKAP1/SIN1. The mTORC2 core complex associates with PRR5/PROTOR1 and/or PRR5L/PROTOR2. Contrary to mTORC1, mTORC2 does not bind to and is not sensitive to FKBP12-rapamycin. Interacts with MAP3K2. Interacts with ATF2. Interacts with MAPK8. Interacts with GTP-bound HRAS and KRAS; inhibiting their activity. Interacts with IFNAR2. Post-translationally, phosphorylation at Ser-128 by PKC promotes relocalization to the perinuclear region, where the mTORC2 complex specifically mediates phosphorylation of SGK1. Phosphorylated at Thr-86 by AKT1 or RPS6KB1 in the presence of growth factors; the effect of this phosphorylation is however unclear. According to two studies, phosphorylation at Thr-86 by AKT1 is part of a positive feedback loop that increases mTORC2 activation. According to another study, phosphorylation at Thr-86 and Thr-398 by RPS6KB1 promotes dissociation from the mTORC2 complex, leading to inhibit mTORC2 signaling.

It localises to the cell membrane. The protein localises to the endoplasmic reticulum membrane. It is found in the early endosome membrane. Its subcellular location is the late endosome membrane. The protein resides in the lysosome membrane. It localises to the golgi apparatus membrane. The protein localises to the mitochondrion outer membrane. It is found in the cytoplasm. Its subcellular location is the perinuclear region. The protein resides in the nucleus. Its activity is regulated as follows. Phosphatidylinositol 3,4,5-trisphosphate (PI(3,4,5)P3) promotes MTOR activation by relieving MAPKAP1/SIN1-mediated inhibition of MTOR that takes place in absence of PI(3,4,5)P3. In terms of biological role, component of the mechanistic target of rapamycin complex 2 (mTORC2), which transduces signals from growth factors to pathways involved in proliferation, cytoskeletal organization, lipogenesis and anabolic output. In response to growth factors, mTORC2 phosphorylates and activates AGC protein kinase family members, including AKT (AKT1, AKT2 and AKT3), PKC (PRKCA, PRKCB and PRKCE) and SGK1. In contrast to mTORC1, mTORC2 is nutrient-insensitive. Within the mTORC2 complex, MAPKAP1/SIN1 acts as a substrate adapter which recognizes and binds AGC protein kinase family members for phosphorylation by MTOR. mTORC2 plays a critical role in AKT1 activation by mediating phosphorylation of different sites depending on the context, such as 'Thr-450', 'Ser-473', 'Ser-477' or 'Thr-479', facilitating the phosphorylation of the activation loop of AKT1 on 'Thr-308' by PDPK1/PDK1 which is a prerequisite for full activation. mTORC2 catalyzes the phosphorylation of SGK1 at 'Ser-422' and of PRKCA on 'Ser-657'. The mTORC2 complex also phosphorylates various proteins involved in insulin signaling, such as FBXW8 and IGF2BP1. mTORC2 acts upstream of Rho GTPases to regulate the actin cytoskeleton, probably by activating one or more Rho-type guanine nucleotide exchange factors. mTORC2 promotes the serum-induced formation of stress-fibers or F-actin. MAPKAP1 inhibits MAP3K2 by preventing its dimerization and autophosphorylation. Inhibits HRAS and KRAS independently of mTORC2 complex. Enhances osmotic stress-induced phosphorylation of ATF2 and ATF2-mediated transcription. Involved in ciliogenesis, regulates cilia length through its interaction with CCDC28B independently of mTORC2 complex. The sequence is that of Target of rapamycin complex 2 subunit MAPKAP1 from Rattus norvegicus (Rat).